A 202-amino-acid polypeptide reads, in one-letter code: T-cell surface glycoprotein CD3 epsilon chain (202 aa).

The signal sequence occupies residues 1–21 (MQSRNLWRILGLCLLSVGAWG). The Extracellular segment spans residues 22-122 (QDEDFKASDD…VCANCIEVNL (101 aa)). In terms of domain architecture, Ig-like spans 37 to 107 (PEKRFKVSIS…ADSIKEKSYL (71 aa)). The cysteines at positions 54 and 96 are disulfide-linked. The chain crosses the membrane as a helical span at residues 123–143 (MAVVTIIVADICLTLGLLLMV). Topologically, residues 144-202 (YYWSKTRKANAKPVMRGTGAGSRPRGQNKEKPPPVPNPDYEPIRKGQQDLYSGLNQRGI) are cytoplasmic. The interval 156–202 (PVMRGTGAGSRPRGQNKEKPPPVPNPDYEPIRKGQQDLYSGLNQRGI) is disordered. An NUMB-binding region region spans residues 170 to 187 (QNKEKPPPVPNPDYEPIR). The region spanning 173-200 (EKPPPVPNPDYEPIRKGQQDLYSGLNQR) is the ITAM domain. Positions 174-181 (KPPPVPNP) are proline-rich sequence. Residues tyrosine 183 and tyrosine 194 each carry the phosphotyrosine modification. Residues 192–202 (DLYSGLNQRGI) are compositionally biased toward polar residues.

The TCR-CD3 complex is composed of a CD3D/CD3E and a CD3G/CD3E heterodimers that preferentially associate with TCRalpha and TCRbeta, respectively, to form TCRalpha/CD3E/CD3G and TCRbeta/CD3G/CD3E trimers. In turn, the hexamer interacts with CD3Z homodimer to form the TCR-CD3 complex. Alternatively, TCRalpha and TCRbeta can be replaced by TCRgamma and TCRdelta. Interacts with CD6. Interacts (via Proline-rich sequence) with NCK1; the interaction is ligand dependent but independent of tyrosine kinase activation. In terms of processing, phosphorylated on Tyr residues after T-cell receptor triggering by LCK in association with CD4/CD8.

It localises to the cell membrane. Its function is as follows. Part of the TCR-CD3 complex present on T-lymphocyte cell surface that plays an essential role in adaptive immune response. When antigen presenting cells (APCs) activate T-cell receptor (TCR), TCR-mediated signals are transmitted across the cell membrane by the CD3 chains CD3D, CD3E, CD3G and CD3Z. All CD3 chains contain immunoreceptor tyrosine-based activation motifs (ITAMs) in their cytoplasmic domain. Upon TCR engagement, these motifs become phosphorylated by Src family protein tyrosine kinases LCK and FYN, resulting in the activation of downstream signaling pathways. In addition of this role of signal transduction in T-cell activation, CD3E plays an essential role in correct T-cell development. Also participates in internalization and cell surface down-regulation of TCR-CD3 complexes via endocytosis sequences present in CD3E cytosolic region. In addition to its role as a TCR coreceptor, it serves as a receptor for ITPRIPL1. Ligand recognition inhibits T-cell activation by promoting interaction with NCK1, which prevents CD3E-ZAP70 interaction and blocks the ERK-NFkB signaling cascade and calcium influx. The sequence is that of T-cell surface glycoprotein CD3 epsilon chain (CD3E) from Canis lupus familiaris (Dog).